Reading from the N-terminus, the 172-residue chain is Peptide deformylase (172 aa).

Residues Cys-94 and His-136 each coordinate Fe cation. Residue Glu-137 is part of the active site. Residue His-140 participates in Fe cation binding.

Belongs to the polypeptide deformylase family. Fe(2+) serves as cofactor.

It carries out the reaction N-terminal N-formyl-L-methionyl-[peptide] + H2O = N-terminal L-methionyl-[peptide] + formate. Its function is as follows. Removes the formyl group from the N-terminal Met of newly synthesized proteins. Requires at least a dipeptide for an efficient rate of reaction. N-terminal L-methionine is a prerequisite for activity but the enzyme has broad specificity at other positions. The chain is Peptide deformylase from Pelagibacter ubique (strain HTCC1062).